The following is a 339-amino-acid chain: DNA-directed RNA polymerase subunit alpha (339 aa).

Residues 1 to 233 are alpha N-terminal domain (alpha-NTD); the sequence is MVREEVAGST…DLFLPFLHAE (233 aa). An alpha C-terminal domain (alpha-CTD) region spans residues 264-339; the sequence is KKGIPLNCIF…IDLLKNKLSF (76 aa).

This sequence belongs to the RNA polymerase alpha chain family. As to quaternary structure, in plastids the minimal PEP RNA polymerase catalytic core is composed of four subunits: alpha, beta, beta', and beta''. When a (nuclear-encoded) sigma factor is associated with the core the holoenzyme is formed, which can initiate transcription.

Its subcellular location is the plastid. The protein resides in the chloroplast. It carries out the reaction RNA(n) + a ribonucleoside 5'-triphosphate = RNA(n+1) + diphosphate. Functionally, DNA-dependent RNA polymerase catalyzes the transcription of DNA into RNA using the four ribonucleoside triphosphates as substrates. This is DNA-directed RNA polymerase subunit alpha from Crithopsis delileana.